A 276-amino-acid polypeptide reads, in one-letter code: Undecaprenyl-diphosphatase (276 aa).

The next 5 helical transmembrane spans lie at 84-104 (YRLG…GLFF), 115-135 (LWVV…AEYV), 188-208 (FGFL…LPDA), 222-242 (QLLV…AWLL), and 250-270 (MYWF…LLAT).

Belongs to the UppP family.

It is found in the cell membrane. The enzyme catalyses di-trans,octa-cis-undecaprenyl diphosphate + H2O = di-trans,octa-cis-undecaprenyl phosphate + phosphate + H(+). Its function is as follows. Catalyzes the dephosphorylation of undecaprenyl diphosphate (UPP). Confers resistance to bacitracin. The protein is Undecaprenyl-diphosphatase of Mycobacterium tuberculosis (strain ATCC 25177 / H37Ra).